Reading from the N-terminus, the 158-residue chain is SsrA-binding protein (158 aa).

The protein belongs to the SmpB family.

It localises to the cytoplasm. In terms of biological role, required for rescue of stalled ribosomes mediated by trans-translation. Binds to transfer-messenger RNA (tmRNA), required for stable association of tmRNA with ribosomes. tmRNA and SmpB together mimic tRNA shape, replacing the anticodon stem-loop with SmpB. tmRNA is encoded by the ssrA gene; the 2 termini fold to resemble tRNA(Ala) and it encodes a 'tag peptide', a short internal open reading frame. During trans-translation Ala-aminoacylated tmRNA acts like a tRNA, entering the A-site of stalled ribosomes, displacing the stalled mRNA. The ribosome then switches to translate the ORF on the tmRNA; the nascent peptide is terminated with the 'tag peptide' encoded by the tmRNA and targeted for degradation. The ribosome is freed to recommence translation, which seems to be the essential function of trans-translation. The sequence is that of SsrA-binding protein from Caldanaerobacter subterraneus subsp. tengcongensis (strain DSM 15242 / JCM 11007 / NBRC 100824 / MB4) (Thermoanaerobacter tengcongensis).